Consider the following 699-residue polypeptide: Endoplasmic reticulum mannosyl-oligosaccharide 1,2-alpha-mannosidase (699 aa).

The Cytoplasmic segment spans residues 1 to 84 (MAACEGRRSG…WKQLSRLQRN (84 aa)). The helical; Signal-anchor for type II membrane protein transmembrane segment at 85-105 (MILFLLAFLLFCGLLFYINLA) threads the bilayer. Residues 106-699 (DHWKALAFRL…AHPLPIWTPA (594 aa)) lie on the Lumenal side of the membrane. Positions 125–243 (IAGLKPANPP…LPPARTQGTP (119 aa)) are disordered. The segment covering 176-201 (DLKDGTQEEATKRQEAPVDPRPEGDP) has biased composition (basic and acidic residues). The Proton donor role is filled by glutamate 330. Residue aspartate 463 is part of the active site. A disulfide bridge connects residues cysteine 527 and cysteine 556. Glutamate 570 acts as the Proton donor in catalysis. The active site involves glutamate 599. Position 688 (threonine 688) interacts with Ca(2+).

This sequence belongs to the glycosyl hydrolase 47 family. Ca(2+) serves as cofactor. As to expression, widely expressed.

The protein localises to the endoplasmic reticulum membrane. It catalyses the reaction N(4)-(alpha-D-Man-(1-&gt;2)-alpha-D-Man-(1-&gt;2)-alpha-D-Man-(1-&gt;3)-[alpha-D-Man-(1-&gt;2)-alpha-D-Man-(1-&gt;3)-[alpha-D-Man-(1-&gt;2)-alpha-D-Man-(1-&gt;6)]-alpha-D-Man-(1-&gt;6)]-beta-D-Man-(1-&gt;4)-beta-D-GlcNAc-(1-&gt;4)-beta-D-GlcNAc)-L-asparaginyl-[protein] (N-glucan mannose isomer 9A1,2,3B1,2,3) + 4 H2O = N(4)-(alpha-D-Man-(1-&gt;3)-[alpha-D-Man-(1-&gt;3)-[alpha-D-Man-(1-&gt;6)]-alpha-D-Man-(1-&gt;6)]-beta-D-Man-(1-&gt;4)-beta-D-GlcNAc-(1-&gt;4)-beta-D-GlcNAc)-L-asparaginyl-[protein] (N-glucan mannose isomer 5A1,2) + 4 beta-D-mannose. The catalysed reaction is N(4)-(alpha-D-Man-(1-&gt;2)-alpha-D-Man-(1-&gt;2)-alpha-D-Man-(1-&gt;3)-[alpha-D-Man-(1-&gt;3)-[alpha-D-Man-(1-&gt;2)-alpha-D-Man-(1-&gt;6)]-alpha-D-Man-(1-&gt;6)]-beta-D-Man-(1-&gt;4)-beta-D-GlcNAc-(1-&gt;4)-beta-D-GlcNAc)-L-asparaginyl-[protein] (N-glucan mannose isomer 8A1,2,3B1,3) + 3 H2O = N(4)-(alpha-D-Man-(1-&gt;3)-[alpha-D-Man-(1-&gt;3)-[alpha-D-Man-(1-&gt;6)]-alpha-D-Man-(1-&gt;6)]-beta-D-Man-(1-&gt;4)-beta-D-GlcNAc-(1-&gt;4)-beta-D-GlcNAc)-L-asparaginyl-[protein] (N-glucan mannose isomer 5A1,2) + 3 beta-D-mannose. It participates in protein modification; protein glycosylation. Its activity is regulated as follows. Inhibited by both 1-deoxymannojirimycin (dMNJ) and kifunensine. Involved in glycoprotein quality control targeting of misfolded glycoproteins for degradation. It primarily trims a single alpha-1,2-linked mannose residue from Man(9)GlcNAc(2) to produce Man(8)GlcNAc(2), but at high enzyme concentrations, as found in the ER quality control compartment (ERQC), it further trims the carbohydrates to Man(5-6)GlcNAc(2). In Homo sapiens (Human), this protein is Endoplasmic reticulum mannosyl-oligosaccharide 1,2-alpha-mannosidase (MAN1B1).